The primary structure comprises 668 residues: Penicillin-binding protein 3 (668 aa).

A helical membrane pass occupies residues 7-23 (LLVFLCVGLIGLIGCSK). Residue S410 is the Acyl-ester intermediate of the active site.

It belongs to the transpeptidase family.

It localises to the cell membrane. Its subcellular location is the forespore inner membrane. The protein resides in the forespore outer membrane. The protein localises to the membrane raft. The catalysed reaction is Preferential cleavage: (Ac)2-L-Lys-D-Ala-|-D-Ala. Also transpeptidation of peptidyl-alanyl moieties that are N-acyl substituents of D-alanine.. Its pathway is cell wall biogenesis; peptidoglycan biosynthesis. Functionally, penicillin-binding proteins (PBPs) function in the late steps of murein biosynthesis. Probably required for both cortical and vegetative peptidoglycan synthesis. Although not usually required for cell division, in the absence of PBP 2B (pbpB) it becomes essential. Confers resistance to oxacillin and cephalexin. The chain is Penicillin-binding protein 3 from Bacillus subtilis (strain 168).